The chain runs to 372 residues: MKIANGQTVIQLFERWSPKSLAVEGDKNGVLIGTLNKPIQRVLTALDVTESVIDEAIELGAELILAHHPIIFRPLSSIRTDTAYGRIIEKAIKHDLTIYAAHTNLDITKGGVNDLMADALGLKDIEVLAPTTTESLYKLVVFVPHTHTDQVREALGRAGAGHIGNYSYCTFNSKGTGTFKPEEGTNPFIGKQGALEFVEELKIETIVTEGQKNKVVAAMIKSHPYEEPAYDLYPLANEGETLGLGRIGYLHESMTLEEFAKQVKKAFDVPTARVVGSLETQIRKVAVLGGDGNKYMAHALRKGADVIVTGDVYYHVPHDALMDGLNIVDPGHNVEKIMKQGVKEKLEKLLKDKKYDTEVVASSVHTDPFTFI.

Residues H67, H68, D106, H332, and E335 each coordinate a divalent metal cation.

Belongs to the GTP cyclohydrolase I type 2/NIF3 family. Homohexamer.

The protein is GTP cyclohydrolase 1 type 2 homolog of Halalkalibacterium halodurans (strain ATCC BAA-125 / DSM 18197 / FERM 7344 / JCM 9153 / C-125) (Bacillus halodurans).